The sequence spans 94 residues: Co-chaperonin GroES (94 aa).

This sequence belongs to the GroES chaperonin family. Heptamer of 7 subunits arranged in a ring. Interacts with the chaperonin GroEL.

The protein resides in the cytoplasm. Its function is as follows. Together with the chaperonin GroEL, plays an essential role in assisting protein folding. The GroEL-GroES system forms a nano-cage that allows encapsulation of the non-native substrate proteins and provides a physical environment optimized to promote and accelerate protein folding. GroES binds to the apical surface of the GroEL ring, thereby capping the opening of the GroEL channel. The protein is Co-chaperonin GroES of Lactococcus lactis subsp. lactis (strain IL1403) (Streptococcus lactis).